A 648-amino-acid chain; its full sequence is Threonine--tRNA ligase (648 aa).

A TGS domain is found at 1 to 61 (MIKITLPDGS…TTDGSLVLYT (61 aa)). Residues 240 to 539 (DHRKLGKELE…LLEHTAGNFP (300 aa)) form a catalytic region. Residues Cys335, His386, and His516 each coordinate Zn(2+).

This sequence belongs to the class-II aminoacyl-tRNA synthetase family. Homodimer. It depends on Zn(2+) as a cofactor.

The protein resides in the cytoplasm. The catalysed reaction is tRNA(Thr) + L-threonine + ATP = L-threonyl-tRNA(Thr) + AMP + diphosphate + H(+). In terms of biological role, catalyzes the attachment of threonine to tRNA(Thr) in a two-step reaction: L-threonine is first activated by ATP to form Thr-AMP and then transferred to the acceptor end of tRNA(Thr). Also edits incorrectly charged L-seryl-tRNA(Thr). This is Threonine--tRNA ligase from Flavobacterium psychrophilum (strain ATCC 49511 / DSM 21280 / CIP 103535 / JIP02/86).